The sequence spans 556 residues: Phenylalanine--tRNA ligase beta subunit (556 aa).

The region spanning 274 to 349 is the B5 domain; it reads HEPEEMEVDL…ITLGLNKIGY (76 aa). Residues D327, D333, E336, and E337 each contribute to the Mg(2+) site.

This sequence belongs to the phenylalanyl-tRNA synthetase beta subunit family. Type 2 subfamily. As to quaternary structure, tetramer of two alpha and two beta subunits. Mg(2+) serves as cofactor.

It localises to the cytoplasm. The catalysed reaction is tRNA(Phe) + L-phenylalanine + ATP = L-phenylalanyl-tRNA(Phe) + AMP + diphosphate + H(+). This chain is Phenylalanine--tRNA ligase beta subunit, found in Korarchaeum cryptofilum (strain OPF8).